The chain runs to 197 residues: Holliday junction branch migration complex subunit RuvA (197 aa).

A domain I region spans residues Met-1–Ala-64. The domain II stretch occupies residues Ser-65–Pro-141. Residues Pro-141 to Lys-145 are flexible linker. Residues Pro-146–Gly-197 form a domain III region.

It belongs to the RuvA family. Homotetramer. Forms an RuvA(8)-RuvB(12)-Holliday junction (HJ) complex. HJ DNA is sandwiched between 2 RuvA tetramers; dsDNA enters through RuvA and exits via RuvB. An RuvB hexamer assembles on each DNA strand where it exits the tetramer. Each RuvB hexamer is contacted by two RuvA subunits (via domain III) on 2 adjacent RuvB subunits; this complex drives branch migration. In the full resolvosome a probable DNA-RuvA(4)-RuvB(12)-RuvC(2) complex forms which resolves the HJ.

The protein resides in the cytoplasm. Its function is as follows. The RuvA-RuvB-RuvC complex processes Holliday junction (HJ) DNA during genetic recombination and DNA repair, while the RuvA-RuvB complex plays an important role in the rescue of blocked DNA replication forks via replication fork reversal (RFR). RuvA specifically binds to HJ cruciform DNA, conferring on it an open structure. The RuvB hexamer acts as an ATP-dependent pump, pulling dsDNA into and through the RuvAB complex. HJ branch migration allows RuvC to scan DNA until it finds its consensus sequence, where it cleaves and resolves the cruciform DNA. This chain is Holliday junction branch migration complex subunit RuvA, found in Anaeromyxobacter sp. (strain Fw109-5).